A 304-amino-acid chain; its full sequence is Aspartate carbamoyltransferase catalytic subunit (304 aa).

2 residues coordinate carbamoyl phosphate: R54 and T55. An L-aspartate-binding site is contributed by K83. Carbamoyl phosphate contacts are provided by R104, H132, and Q135. Residues R165 and R226 each coordinate L-aspartate. The carbamoyl phosphate site is built by L265 and P266.

Belongs to the aspartate/ornithine carbamoyltransferase superfamily. ATCase family. As to quaternary structure, heterooligomer of catalytic and regulatory chains.

The enzyme catalyses carbamoyl phosphate + L-aspartate = N-carbamoyl-L-aspartate + phosphate + H(+). It functions in the pathway pyrimidine metabolism; UMP biosynthesis via de novo pathway; (S)-dihydroorotate from bicarbonate: step 2/3. Its function is as follows. Catalyzes the condensation of carbamoyl phosphate and aspartate to form carbamoyl aspartate and inorganic phosphate, the committed step in the de novo pyrimidine nucleotide biosynthesis pathway. The chain is Aspartate carbamoyltransferase catalytic subunit from Pyrobaculum islandicum (strain DSM 4184 / JCM 9189 / GEO3).